Reading from the N-terminus, the 87-residue chain is Cell division topological specificity factor (87 aa).

The protein belongs to the MinE family.

In terms of biological role, prevents the cell division inhibition by proteins MinC and MinD at internal division sites while permitting inhibition at polar sites. This ensures cell division at the proper site by restricting the formation of a division septum at the midpoint of the long axis of the cell. The protein is Cell division topological specificity factor of Rhizobium meliloti (strain 1021) (Ensifer meliloti).